A 412-amino-acid polypeptide reads, in one-letter code: Putative competence-damage inducible protein (412 aa).

It belongs to the CinA family.

This chain is Putative competence-damage inducible protein, found in Caldanaerobacter subterraneus subsp. tengcongensis (strain DSM 15242 / JCM 11007 / NBRC 100824 / MB4) (Thermoanaerobacter tengcongensis).